The primary structure comprises 549 residues: MGSRNSSSAGSGSLEPSEGLSRRGAGLRRSEEEEEEDEDVDLAQVLAYLLRRGQVRLVQGGGAANLQLIQALSDSEEEHDSAWDGRLGDRYNPPVDATPDTRELEYNEIKTRVELATGRLGLGRTAQEHSFPRMLHQRERGLCHRGSFSLGEQSRVMSHFLPNDLSFTDTYSQKAFCGIYSKDGQIFMSACQDQTIRLYDCRYGRFHKFKSIKARDVGWSVLDVAFTPDGNHFLYSSWSDYIHICSIYGEGDTHTALDLRPDERRFAVFSIAVSSDGREVLGGANDGCLYVFDREQNRRTLQIESHEDDVNAVAFADISSQILFSGGDDAICKVWDRRTMREDDPKPVGALAGHQDGITFIDSKGDARYLISNSKDQTIKLWDIRRFSSREGMEASRLAATQQNWDYRWQQVPKKAWKKLKLPGDSSLMTYRGHGVLHTLIRCRFSPAHSTGQQFIYSGCSTGKVVVYDLLSGHIVKKLTNHKACVRDVSWHPFEEKIVSSSWDGSLRLWQYRQAEYFQDDMTESDRNRVCSSGPAPVPCPSVAFSSPQ.

The segment covering 1–24 has biased composition (low complexity); it reads MGSRNSSSAGSGSLEPSEGLSRRG. The segment at 1–40 is disordered; that stretch reads MGSRNSSSAGSGSLEPSEGLSRRGAGLRRSEEEEEEDEDV. Phosphoserine is present on residues Ser-73 and Ser-75. Residues 80–89 show a composition bias toward basic and acidic residues; it reads DSAWDGRLGD. The segment at 80-100 is disordered; sequence DSAWDGRLGDRYNPPVDATPD. 7 WD repeats span residues 170–210, 216–258, 263–302, 305–345, 353–392, 435–480, and 481–520; these read TYSQ…HKFK, DVGW…TALD, ERRFAVFSIAVSSDGREVLGGANDGCLYVFDREQNRRTLQ, SHED…EDDP, GHQDGITFIDSKGDARYLISNSKDQTIKLWDIRRFSSREG, GVLH…KKLT, and NHKACVRDVSWHPFEEKIVSSSWDGSLRLWQYRQAEYFQD.

In terms of assembly, interacts with DDB1 and CUL4A.

Its pathway is protein modification; protein ubiquitination. Its function is as follows. May function as a substrate receptor for CUL4-DDB1 E3 ubiquitin-protein ligase complex. This is DDB1- and CUL4-associated factor 11 (Dcaf11) from Rattus norvegicus (Rat).